A 252-amino-acid polypeptide reads, in one-letter code: Imidazole glycerol phosphate synthase subunit HisF (252 aa).

Catalysis depends on residues Asp-11 and Asp-130.

The protein belongs to the HisA/HisF family. In terms of assembly, heterodimer of HisH and HisF.

It is found in the cytoplasm. The enzyme catalyses 5-[(5-phospho-1-deoxy-D-ribulos-1-ylimino)methylamino]-1-(5-phospho-beta-D-ribosyl)imidazole-4-carboxamide + L-glutamine = D-erythro-1-(imidazol-4-yl)glycerol 3-phosphate + 5-amino-1-(5-phospho-beta-D-ribosyl)imidazole-4-carboxamide + L-glutamate + H(+). It functions in the pathway amino-acid biosynthesis; L-histidine biosynthesis; L-histidine from 5-phospho-alpha-D-ribose 1-diphosphate: step 5/9. Its function is as follows. IGPS catalyzes the conversion of PRFAR and glutamine to IGP, AICAR and glutamate. The HisF subunit catalyzes the cyclization activity that produces IGP and AICAR from PRFAR using the ammonia provided by the HisH subunit. This Hyphomonas neptunium (strain ATCC 15444) protein is Imidazole glycerol phosphate synthase subunit HisF.